Here is a 474-residue protein sequence, read N- to C-terminus: MAYSATQTKKGYQAGVKDYRLTYYTPDYTPKDTDVLACFRVTPQPGVPPEEAGAAVAAESSTGTWTTVWTDLLTDLDRYKGRCYDIEPVPGEENQYFCFVAYPLDLFEEGSVTNMLTSIVGNVFGFKALKALRLEDVRIPVAYLKTFQGPPHGIQVERDKLNKYGRPLLGCTIKPKLGLSAKNYGRAVYEALRGGLDFTKDDENINSQPFQRWRDRYLFVMEAVHKAQAETGEIKGHYLNVTAPTCEEMFKRAEFAKEIGAPIIMHDYLTAGFTANTSLAKWCRDNGILLHIHRAMHAVIDRQKNHGIHFRVLAKCLRMSGGDHLHAGTVVGKLEGDRAITMGFVDLMRENYVEADRSRGIFFTQDWASMPGVMPVASGGIHVWHMPALVEIFGDDAVLQFGGGTLGHPWGNAPGATANRVALEACIQARNEGRDLAREGNEIIREAAKWSPELAAACELWKEIKFEFKPVDTL.

N122 and T172 together coordinate substrate. The active-site Proton acceptor is K174. K176 contributes to the substrate binding site. 3 residues coordinate Mg(2+): K200, D202, and E203. K200 is modified (N6-carboxylysine). The active-site Proton acceptor is H293. Substrate-binding residues include R294, H326, and S378.

This sequence belongs to the RuBisCO large chain family. Type I subfamily. Heterohexadecamer of 8 large chains and 8 small chains; disulfide-linked. The disulfide link is formed within the large subunit homodimers. It depends on Mg(2+) as a cofactor. The disulfide bond which can form in the large chain dimeric partners within the hexadecamer appears to be associated with oxidative stress and protein turnover.

It is found in the carboxysome. The enzyme catalyses 2 (2R)-3-phosphoglycerate + 2 H(+) = D-ribulose 1,5-bisphosphate + CO2 + H2O. The catalysed reaction is D-ribulose 1,5-bisphosphate + O2 = 2-phosphoglycolate + (2R)-3-phosphoglycerate + 2 H(+). Its function is as follows. RuBisCO catalyzes two reactions: the carboxylation of D-ribulose 1,5-bisphosphate, the primary event in carbon dioxide fixation, as well as the oxidative fragmentation of the pentose substrate in the photorespiration process. Both reactions occur simultaneously and in competition at the same active site. This Synechococcus sp. (strain JA-3-3Ab) (Cyanobacteria bacterium Yellowstone A-Prime) protein is Ribulose bisphosphate carboxylase large chain.